Consider the following 318-residue polypeptide: NADH-ubiquinone oxidoreductase chain 1 (318 aa).

Helical transmembrane passes span 2-22 (FMIN…FLTL), 69-89 (FMFT…WVPL), 102-122 (MLFI…SGWA), 146-166 (LAII…STLT), 171-191 (HLWL…STLA), 231-251 (IIMM…NPLL), 253-273 (EAHT…FLWV), and 294-314 (LPLT…LACI).

Belongs to the complex I subunit 1 family. As to quaternary structure, core subunit of respiratory chain NADH dehydrogenase (Complex I) which is composed of 45 different subunits.

It localises to the mitochondrion inner membrane. The catalysed reaction is a ubiquinone + NADH + 5 H(+)(in) = a ubiquinol + NAD(+) + 4 H(+)(out). Its function is as follows. Core subunit of the mitochondrial membrane respiratory chain NADH dehydrogenase (Complex I) which catalyzes electron transfer from NADH through the respiratory chain, using ubiquinone as an electron acceptor. Essential for the catalytic activity and assembly of complex I. This is NADH-ubiquinone oxidoreductase chain 1 (MT-ND1) from Dugong dugon (Dugong).